The following is a 255-amino-acid chain: ETS-related transcription factor Elf-5 (255 aa).

In terms of domain architecture, PNT spans 33 to 119 (YPAFEHQTAC…FILQSIRSQG (87 aa)). The segment at residues 163–244 (SHLWEFVRDL…VDRRLVYKFG (82 aa)) is a DNA-binding region (ETS).

This sequence belongs to the ETS family.

The protein resides in the nucleus. Transcriptionally activator that may play a role in regulating the later stages of keratinocytes terminal differentiation. Binds to DNA sequences containing the consensus nucleotide core sequence GGA[AT]. The polypeptide is ETS-related transcription factor Elf-5 (ELF5) (Bos taurus (Bovine)).